The following is a 243-amino-acid chain: Adenosylcobinamide-GDP ribazoletransferase (243 aa).

The next 5 helical transmembrane spans lie at 31-51 (LLFY…LNIA), 57-77 (LLLH…ALHL), 109-129 (IAVV…LALI), 135-155 (MALI…FLTT), and 188-208 (LVIA…VFIW).

This sequence belongs to the CobS family. The cofactor is Mg(2+).

The protein localises to the cell inner membrane. It carries out the reaction alpha-ribazole + adenosylcob(III)inamide-GDP = adenosylcob(III)alamin + GMP + H(+). It catalyses the reaction alpha-ribazole 5'-phosphate + adenosylcob(III)inamide-GDP = adenosylcob(III)alamin 5'-phosphate + GMP + H(+). Its pathway is cofactor biosynthesis; adenosylcobalamin biosynthesis; adenosylcobalamin from cob(II)yrinate a,c-diamide: step 7/7. Functionally, joins adenosylcobinamide-GDP and alpha-ribazole to generate adenosylcobalamin (Ado-cobalamin). Also synthesizes adenosylcobalamin 5'-phosphate from adenosylcobinamide-GDP and alpha-ribazole 5'-phosphate. This Pseudomonas fluorescens (strain Pf0-1) protein is Adenosylcobinamide-GDP ribazoletransferase.